The following is a 442-amino-acid chain: GTPase Der (442 aa).

EngA-type G domains lie at 4–169 and 178–353; these read PIVA…PENN and IKIA…EQAT. Residues 10 to 17, 57 to 61, 121 to 124, 184 to 191, 231 to 235, and 296 to 299 contribute to the GTP site; these read GRPNVGKS, DTGGL, NKIE, DTAGM, and NKWD. The KH-like domain maps to 354–438; it reads RRISTSVLNE…PMRFFIRERE (85 aa).

Belongs to the TRAFAC class TrmE-Era-EngA-EngB-Septin-like GTPase superfamily. EngA (Der) GTPase family. Associates with the 50S ribosomal subunit.

Functionally, GTPase that plays an essential role in the late steps of ribosome biogenesis. The chain is GTPase Der from Heliobacterium modesticaldum (strain ATCC 51547 / Ice1).